A 75-amino-acid chain; its full sequence is Protein P8 (75 aa).

Residues 19–47 (PMGGMPSIASSSSAETGQQTQSGNFTGGG) are disordered. A compositionally biased stretch (polar residues) spans 26-39 (IASSSSAETGQQTQ). Residues 55-72 (NNQLLIVGAVVIGLFLVI) form a helical membrane-spanning segment.

The protein resides in the virion membrane. In Pseudoalteromonas phage PM2 (Bacteriophage PM2), this protein is Protein P8 (VIII).